Here is a 122-residue protein sequence, read N- to C-terminus: Secreted RxLR effector protein 80 (122 aa).

The signal sequence occupies residues 1 to 21 (MKKRALPIVIFVISLQQSSQS). The RxLR signature appears at 72 to 75 (RSLR).

The protein belongs to the RxLR effector family.

It is found in the secreted. Its subcellular location is the host endoplasmic reticulum membrane. Functionally, secreted effector that dos not suppress the host cell death induced by cell death-inducing proteins. The chain is Secreted RxLR effector protein 80 from Plasmopara viticola (Downy mildew of grapevine).